The sequence spans 241 residues: MTTTVIIIIFVAIFATTLHDARGATMEPCLESMKTASLPDLPYAYDALEPAISEEIMRLHHQKHHQTYVTQYNKALNSLRSAMADGDHSSVVKLQSLIKFNGGGHVNHAIFWKNLAPVHEGGGKPPHDPLASAIDAHFGSLEGLIQKMNAEGAAVQGSGWVWFGLDRELKRLVVETTANQDPLVTKGSHLVPLIGIDVWEHAYYPQYKNARAEYLKNIWTVINWKYAADVFEKHTRDLDIN.

Mn(2+)-binding residues include histidine 60, histidine 108, aspartate 197, and histidine 201.

The protein belongs to the iron/manganese superoxide dismutase family. Homotetramer. Mn(2+) serves as cofactor.

Its subcellular location is the mitochondrion matrix. It carries out the reaction 2 superoxide + 2 H(+) = H2O2 + O2. Destroys superoxide anion radicals which are normally produced within the cells and which are toxic to biological systems. The sequence is that of Superoxide dismutase [Mn] 2, mitochondrial (MSD2) from Arabidopsis thaliana (Mouse-ear cress).